The sequence spans 173 residues: DASH complex subunit SPC19 (173 aa).

Belongs to the DASH complex SPC19 family. Component of the DASH complex consisting of ASK1, DAD1, DAD2, DAD3, DAD4, DAM1, DUO1, HSK3, SPC19 and SPC34, with a stoichiometry of one copy of each subunit per complex. Multiple DASH complexes oligomerize to form a ring that encircles spindle microtubules and organizes the rod-like NDC80 complexes of the outer kinetochore. DASH complex oligomerization strengthens microtubule attachments. On cytoplasmic microtubules, DASH complexes appear to form patches instead of rings.

It localises to the nucleus. Its subcellular location is the cytoplasm. It is found in the cytoskeleton. The protein localises to the spindle. The protein resides in the chromosome. It localises to the centromere. Its subcellular location is the kinetochore. Its function is as follows. Component of the DASH complex that connects microtubules with kinetochores and couples microtubule depolymerisation to chromosome movement; it is involved in retrieving kinetochores to the spindle poles before their re-orientation on the spindle in early mitosis and allows microtubule depolymerization to pull chromosomes apart and resist detachment during anaphase. Kinetochores, consisting of a centromere-associated inner segment and a microtubule-contacting outer segment, play a crucial role in chromosome segregation by mediating the physical connection between centromeric DNA and microtubules. Kinetochores also serve as an input point for the spindle assembly checkpoint, which delays anaphase until all chromosomes have bioriented on the mitotic spindle. In Chaetomium thermophilum (strain DSM 1495 / CBS 144.50 / IMI 039719) (Thermochaetoides thermophila), this protein is DASH complex subunit SPC19.